Reading from the N-terminus, the 494-residue chain is NADPH:adrenodoxin oxidoreductase, mitochondrial (494 aa).

The transit peptide at 1 to 34 (MAPRCWHWWRWSAWSGLRPSPSRSTPTPGFCQKF) directs the protein to the mitochondrion. Positions 51, 72, 80, and 116 each coordinate FAD. NADP(+) is bound by residues 187–190 (QGNV), 231–232 (RR), and E243. S313 carries the post-translational modification Phosphoserine. FAD contacts are provided by residues W401 and 408-410 (GVI). G408 is a binding site for NADP(+).

The protein belongs to the ferredoxin--NADP reductase type 1 family. Monomer. Interacts directly with FDX1. FAD is required as a cofactor. As to expression, expressed in the adrenal, testis and ovary and to a lesser extent in the liver and kidney.

The protein resides in the mitochondrion inner membrane. It carries out the reaction 2 reduced [adrenodoxin] + NADP(+) + H(+) = 2 oxidized [adrenodoxin] + NADPH. The enzyme catalyses 2 reduced [2Fe-2S]-[ferredoxin] + NADP(+) + H(+) = 2 oxidized [2Fe-2S]-[ferredoxin] + NADPH. Its pathway is steroid metabolism; cholesterol metabolism. Serves as the first electron transfer protein in all the mitochondrial P450 systems including cholesterol side chain cleavage in all steroidogenic tissues, steroid 11-beta hydroxylation in the adrenal cortex, 25-OH-vitamin D3-24 hydroxylation in the kidney, and sterol C-27 hydroxylation in the liver. Also acts as a ferredoxin--NADP(+) reductase essential for coenzyme Q biosynthesis: together with FDX2, transfers the electrons required for the hydroxylation reaction performed by COQ6. This is NADPH:adrenodoxin oxidoreductase, mitochondrial (Fdxr) from Mus musculus (Mouse).